The sequence spans 385 residues: Trichodiene synthase (385 aa).

This sequence belongs to the trichodiene synthase family.

The catalysed reaction is (2E,6E)-farnesyl diphosphate = trichodiene + diphosphate. It participates in sesquiterpene biosynthesis; trichothecene biosynthesis. Functionally, TS is a member of the terpene cyclase group of enzymes. It catalyzes the isomerization and cyclization of farnesyl pyro-phosphate to form trichodiene, the first cyclic intermediate in the biosynthetic pathway for trichothecenes. It serves to branch trichothecene biosynthesis from the isoprenoid pathway. The sequence is that of Trichodiene synthase (TRI5) from Paramyrothecium roridum (Myrothecium leaf spot fungus).